The primary structure comprises 272 residues: Ribosome maturation factor RimP (272 aa).

Positions 209 to 272 are disordered; it reads QNLGILPPPP…RGDIDPPEGD (64 aa). The segment covering 250 to 266 has biased composition (basic and acidic residues); the sequence is NTKEHRLAAERLRRGDI.

The protein belongs to the RimP family.

The protein resides in the cytoplasm. Required for maturation of 30S ribosomal subunits. This is Ribosome maturation factor RimP from Rhodopseudomonas palustris (strain BisA53).